A 306-amino-acid chain; its full sequence is MEGIKFADVLRSFEKKAEDDEYVSVERDYNERKVIENDVRRTELLGVDKRNRKVIKVLKRLLFVELDKIPIKYTQGMSEIASVFVLYYFQNIVEEEVAKGVLASGSDEESAEESAADGFSEQFIEAPEDENVELKRFVSRHKDTTAILGIVLTNVFRRKLEPLVVDDFKLYKENMRIFVEMMKKKGIRIPELESYKFMGSILTFFLRNLSRMEDVHKVFEIILSCPNTCPFLLLVLFYDKISNGKTIDSIVNNDLFPKVVKLEEEFVETKKRVESRSGFSRMRVMLVGGIASIVAAVVVYKITKKE.

N-linked (GlcNAc...) asparagine glycosylation occurs at Asn208. 2 helical membrane passes run 218–238 (VFEI…VLFY) and 284–304 (VMLV…KITK).

Its subcellular location is the membrane. This is an uncharacterized protein from Encephalitozoon cuniculi (strain GB-M1) (Microsporidian parasite).